The sequence spans 1068 residues: Carbamoyl phosphate synthase large chain (1068 aa).

The carboxyphosphate synthetic domain stretch occupies residues 1 to 401 (MPLNKDIKKV…AFLKGTRSLE (401 aa)). 12 residues coordinate ATP: R129, R169, G175, G176, K208, V210, E215, G241, I242, H243, Q284, and E298. Residues 133–327 (RNVMSRINEP…IAKVASKIAL (195 aa)) form the ATP-grasp 1 domain. Mg(2+) is bound by residues Q284, E298, and N300. Positions 284, 298, and 300 each coordinate Mn(2+). The tract at residues 402-549 (IGKYSLEHKK…YSTYDVYDEV (148 aa)) is oligomerization domain. The interval 550–932 (EVSKNKKVIV…ALYKGFIGAN (383 aa)) is carbamoyl phosphate synthetic domain. Residues 674-864 (DELLEKLKIA…IVDIATRVML (191 aa)) enclose the ATP-grasp 2 domain. The ATP site is built by R710, K749, L751, E755, G780, V781, H782, S783, Q823, and E835. 3 residues coordinate Mg(2+): Q823, E835, and N837. Residues Q823, E835, and N837 each coordinate Mn(2+). The MGS-like domain occupies 933–1068 (ISIKKEKGTV…ETLYIFDLSN (136 aa)). An allosteric domain region spans residues 933 to 1068 (ISIKKEKGTV…ETLYIFDLSN (136 aa)).

Belongs to the CarB family. As to quaternary structure, composed of two chains; the small (or glutamine) chain promotes the hydrolysis of glutamine to ammonia, which is used by the large (or ammonia) chain to synthesize carbamoyl phosphate. Tetramer of heterodimers (alpha,beta)4. Mg(2+) is required as a cofactor. It depends on Mn(2+) as a cofactor.

It catalyses the reaction hydrogencarbonate + L-glutamine + 2 ATP + H2O = carbamoyl phosphate + L-glutamate + 2 ADP + phosphate + 2 H(+). It carries out the reaction hydrogencarbonate + NH4(+) + 2 ATP = carbamoyl phosphate + 2 ADP + phosphate + 2 H(+). It participates in amino-acid biosynthesis; L-arginine biosynthesis; carbamoyl phosphate from bicarbonate: step 1/1. It functions in the pathway pyrimidine metabolism; UMP biosynthesis via de novo pathway; (S)-dihydroorotate from bicarbonate: step 1/3. Large subunit of the glutamine-dependent carbamoyl phosphate synthetase (CPSase). CPSase catalyzes the formation of carbamoyl phosphate from the ammonia moiety of glutamine, carbonate, and phosphate donated by ATP, constituting the first step of 2 biosynthetic pathways, one leading to arginine and/or urea and the other to pyrimidine nucleotides. The large subunit (synthetase) binds the substrates ammonia (free or transferred from glutamine from the small subunit), hydrogencarbonate and ATP and carries out an ATP-coupled ligase reaction, activating hydrogencarbonate by forming carboxy phosphate which reacts with ammonia to form carbamoyl phosphate. This is Carbamoyl phosphate synthase large chain from Clostridium botulinum (strain Langeland / NCTC 10281 / Type F).